A 357-amino-acid polypeptide reads, in one-letter code: Sorbitol dehydrogenase (357 aa).

Ala-2 carries the post-translational modification N-acetylalanine. Cys-45 contributes to the Zn(2+) binding site. Tyr-51 serves as a coordination point for substrate. The Zn(2+) site is built by His-70 and Glu-71. Glu-156 contributes to the substrate binding site. Position 169 is a phosphoserine (Ser-169). NAD(+) is bound by residues Val-184, Asp-204, Arg-209, Val-273–Met-275, and Val-297–Arg-299. Substrate is bound by residues Arg-299 and Tyr-300.

The protein belongs to the zinc-containing alcohol dehydrogenase family. As to quaternary structure, homotetramer. Zn(2+) serves as cofactor. In terms of tissue distribution, testis has the highest level of expression, followed by kidney, liver, and lung. Low levels of expression are also observed in lens, brain, and skeletal muscle. Expressed in sperm flagellum and very low expression in the sperm head.

The protein localises to the mitochondrion membrane. The protein resides in the cell projection. Its subcellular location is the cilium. It is found in the flagellum. It catalyses the reaction keto-D-fructose + NADH + H(+) = D-sorbitol + NAD(+). It carries out the reaction xylitol + NAD(+) = D-xylulose + NADH + H(+). The catalysed reaction is L-iditol + NAD(+) = keto-L-sorbose + NADH + H(+). Its activity is regulated as follows. Inhibited in vitro by p-hydroxymercuribenzoate, EDTA, l,l0-phenanthroline and N-ethylmaleimide. In terms of biological role, polyol dehydrogenase that catalyzes the reversible NAD(+)-dependent oxidation of various sugar alcohols. Is active with D-sorbitol (D-glucitol) leading to the C2-oxidized product D-fructose. Is a key enzyme in the polyol pathway that interconverts glucose and fructose via sorbitol, which constitutes an important alternate route for glucose metabolism. May play a role in sperm motility by using sorbitol as an alternative energy source for sperm motility and protein tyrosine phosphorylation. Has no activity on ethanol. Cannot use NADP(+) as the electron acceptor. The chain is Sorbitol dehydrogenase (Sord) from Mus musculus (Mouse).